We begin with the raw amino-acid sequence, 691 residues long: DNA ligase (691 aa).

Residues 53-57 (DSEYD), 102-103 (SL), and Glu135 contribute to the NAD(+) site. Lys137 functions as the N6-AMP-lysine intermediate in the catalytic mechanism. Arg158, Glu195, Lys310, and Lys334 together coordinate NAD(+). Residues Cys428, Cys431, Cys446, and Cys452 each contribute to the Zn(2+) site. The BRCT domain occupies 613 to 691 (SEGLPLDGQT…EEEFLALVGE (79 aa)).

It belongs to the NAD-dependent DNA ligase family. LigA subfamily. The cofactor is Mg(2+). Mn(2+) is required as a cofactor.

The enzyme catalyses NAD(+) + (deoxyribonucleotide)n-3'-hydroxyl + 5'-phospho-(deoxyribonucleotide)m = (deoxyribonucleotide)n+m + AMP + beta-nicotinamide D-nucleotide.. Functionally, DNA ligase that catalyzes the formation of phosphodiester linkages between 5'-phosphoryl and 3'-hydroxyl groups in double-stranded DNA using NAD as a coenzyme and as the energy source for the reaction. It is essential for DNA replication and repair of damaged DNA. The chain is DNA ligase from Psychrobacter arcticus (strain DSM 17307 / VKM B-2377 / 273-4).